The following is a 702-amino-acid chain: Methionine--tRNA ligase (702 aa).

The 'HIGH' region motif lies at 23–33 (PYANGPLHLGH). Residues cysteine 154, cysteine 157, cysteine 167, and cysteine 170 each contribute to the Zn(2+) site. The short motif at 341-345 (KMSKS) is the 'KMSKS' region element. Lysine 344 provides a ligand contact to ATP. The interval 562 to 593 (LAPPPASAKQQNASMSNTAPPPTAEEPETTAP) is disordered. Positions 569 to 578 (AKQQNASMSN) are enriched in polar residues. One can recognise a tRNA-binding domain in the interval 599–702 (DFAKLDLRIG…SSAQPGMPVR (104 aa)).

The protein belongs to the class-I aminoacyl-tRNA synthetase family. MetG type 1 subfamily. Homodimer. Requires Zn(2+) as cofactor.

The protein resides in the cytoplasm. The catalysed reaction is tRNA(Met) + L-methionine + ATP = L-methionyl-tRNA(Met) + AMP + diphosphate. Is required not only for elongation of protein synthesis but also for the initiation of all mRNA translation through initiator tRNA(fMet) aminoacylation. The protein is Methionine--tRNA ligase of Xylella fastidiosa (strain M23).